The chain runs to 981 residues: Transcription factor TAC1 (981 aa).

Over residues 1–29 the composition is skewed to polar residues; it reads MDTSSSSGTHPSTFNNLTKQQELTGNDPN. Residues 1 to 33 form a disordered region; sequence MDTSSSSGTHPSTFNNLTKQQELTGNDPNDTNR. A DNA-binding region (zn(2)-C6 fungal-type) is located at residues 40–68; the sequence is CDSCRRKKIKCNGSYPCGNCIQAKNTSNC. 3 disordered regions span residues 74–106, 165–199, and 868–902; these read PVRK…TFSG, HSNS…TSHS, and LRDN…SNST. Over residues 165–177 the composition is skewed to low complexity; that stretch reads HSNSSMFNNNSLS. The segment covering 868-880 has biased composition (polar residues); the sequence is LRDNSTNHGQNNM. Residues 881–902 are compositionally biased toward low complexity; the sequence is NPSPTITNNTYNSNINTGSNST.

In terms of processing, phosphorylated. Phosphorylation leads to hyperactivation.

Its subcellular location is the nucleus. With respect to regulation, drugs such as farnesol and 1-dodecanol are able to hyperactivate TAC1 probably via phosphorylation by the Mediator complex. Functionally, transcriptional activator of drug-responsive genes including the ABC-type transporters CDR1 and CDR2, as well as HSP12 and RTA3. Binds the cis-acting regulatory drug-responsive elements (DREs) with the consensus sequence 5'-CGGAWATCGGATATTTTTTT-3' in the promoters of target genes. In Candida albicans (strain SC5314 / ATCC MYA-2876) (Yeast), this protein is Transcription factor TAC1.